Consider the following 59-residue polypeptide: Sec-independent protein translocase protein TatA 1 (59 aa).

A helical transmembrane segment spans residues 3 to 23 (FPLPWQLILILLVILVIFGAS).

It belongs to the TatA/E family. In terms of assembly, forms a complex with TatC.

The protein resides in the cell inner membrane. In terms of biological role, part of the twin-arginine translocation (Tat) system that transports large folded proteins containing a characteristic twin-arginine motif in their signal peptide across membranes. TatA could form the protein-conducting channel of the Tat system. The polypeptide is Sec-independent protein translocase protein TatA 1 (Aquifex aeolicus (strain VF5)).